Reading from the N-terminus, the 772-residue chain is Metal transporter CNNM4 (772 aa).

Over Met1–Gly175 the chain is Extracellular. Asn120 carries N-linked (GlcNAc...) asparagine glycosylation. Residues Arg176–Ile196 form a helical membrane-spanning segment. One can recognise a CNNM transmembrane domain in the interval Arg176–Glu356. Topologically, residues Phe197–Gly237 are cytoplasmic. Residues Asn238 to Leu258 constitute an intramembrane region (helical). Over Leu259–Asn261 the chain is Cytoplasmic. The helical transmembrane segment at Leu262–Glu282 threads the bilayer. At Ile283–Ser290 the chain is on the extracellular side. The chain crosses the membrane as a helical span at residues Arg291 to Pro313. At Leu314 to Ile772 the chain is on the cytoplasmic side. CBS domains lie at Met375 to Leu436 and Tyr443 to Glu509. Residues Pro647 to Ser676 are disordered. Phosphoserine is present on residues Ser658, Ser662, and Ser767.

Belongs to the ACDP family. Interacts with COX11. Present in spinal cord dorsal horn neurons and in developing teeth (at protein level). In the tooth, higher expression is found in the ameloblasts during the transition and maturation phases of amelogenesis; reduced expression in the odontoblasts.

The protein localises to the cell membrane. Functionally, probable metal transporter. The interaction with the metal ion chaperone COX11 suggests that it may play a role in sensory neuron functions. May play a role in biomineralization and retinal function. The protein is Metal transporter CNNM4 (Cnnm4) of Rattus norvegicus (Rat).